The following is a 460-amino-acid chain: Bifunctional protein GlmU (460 aa).

Residues 1 to 235 (MALSAAIVLA…PLTVEGVNDR (235 aa)) are pyrophosphorylase. UDP-N-acetyl-alpha-D-glucosamine contacts are provided by residues 9–12 (LAAG), lysine 23, glutamine 76, and 81–82 (GT). Aspartate 109 provides a ligand contact to Mg(2+). Residues glycine 146, glutamate 161, asparagine 176, and asparagine 233 each coordinate UDP-N-acetyl-alpha-D-glucosamine. Asparagine 233 lines the Mg(2+) pocket. Residues 236 to 256 (VQLAALSKTYNRRVCERWMRD) form a linker region. Residues 257-460 (GVTILDPETT…VEGWKPAWER (204 aa)) form an N-acetyltransferase region. Residues arginine 338 and lysine 356 each contribute to the UDP-N-acetyl-alpha-D-glucosamine site. Histidine 368 acts as the Proton acceptor in catalysis. Residues tyrosine 371 and asparagine 382 each coordinate UDP-N-acetyl-alpha-D-glucosamine. Acetyl-CoA contacts are provided by residues 391–392 (NY) and alanine 428.

The protein in the N-terminal section; belongs to the N-acetylglucosamine-1-phosphate uridyltransferase family. In the C-terminal section; belongs to the transferase hexapeptide repeat family. Homotrimer. Requires Mg(2+) as cofactor.

The protein localises to the cytoplasm. It catalyses the reaction alpha-D-glucosamine 1-phosphate + acetyl-CoA = N-acetyl-alpha-D-glucosamine 1-phosphate + CoA + H(+). It carries out the reaction N-acetyl-alpha-D-glucosamine 1-phosphate + UTP + H(+) = UDP-N-acetyl-alpha-D-glucosamine + diphosphate. Its pathway is nucleotide-sugar biosynthesis; UDP-N-acetyl-alpha-D-glucosamine biosynthesis; N-acetyl-alpha-D-glucosamine 1-phosphate from alpha-D-glucosamine 6-phosphate (route II): step 2/2. It functions in the pathway nucleotide-sugar biosynthesis; UDP-N-acetyl-alpha-D-glucosamine biosynthesis; UDP-N-acetyl-alpha-D-glucosamine from N-acetyl-alpha-D-glucosamine 1-phosphate: step 1/1. The protein operates within bacterial outer membrane biogenesis; LPS lipid A biosynthesis. Catalyzes the last two sequential reactions in the de novo biosynthetic pathway for UDP-N-acetylglucosamine (UDP-GlcNAc). The C-terminal domain catalyzes the transfer of acetyl group from acetyl coenzyme A to glucosamine-1-phosphate (GlcN-1-P) to produce N-acetylglucosamine-1-phosphate (GlcNAc-1-P), which is converted into UDP-GlcNAc by the transfer of uridine 5-monophosphate (from uridine 5-triphosphate), a reaction catalyzed by the N-terminal domain. The polypeptide is Bifunctional protein GlmU (Bifidobacterium longum (strain NCC 2705)).